The primary structure comprises 594 residues: Jacalin-related lectin 44 (594 aa).

The segment at M1–G23 is disordered. 4 consecutive Jacalin-type lectin domains span residues I2–S148, P151–T293, P296–P441, and V448–P588. The segment covering I10 to G23 has biased composition (basic and acidic residues).

It belongs to the jacalin lectin family.

This Arabidopsis thaliana (Mouse-ear cress) protein is Jacalin-related lectin 44 (JAL44).